Reading from the N-terminus, the 217-residue chain is Cytidylate kinase (217 aa).

Position 9–17 (9–17 (GPAGSGKTT)) interacts with ATP.

Belongs to the cytidylate kinase family. Type 1 subfamily.

The protein resides in the cytoplasm. It catalyses the reaction CMP + ATP = CDP + ADP. The catalysed reaction is dCMP + ATP = dCDP + ADP. This is Cytidylate kinase from Thermosipho melanesiensis (strain DSM 12029 / CIP 104789 / BI429).